A 203-amino-acid polypeptide reads, in one-letter code: Superoxide dismutase [Mn] (203 aa).

Mn(2+) is bound by residues histidine 27, histidine 81, aspartate 164, and histidine 168.

This sequence belongs to the iron/manganese superoxide dismutase family. As to quaternary structure, homodimer. Requires Mn(2+) as cofactor.

It catalyses the reaction 2 superoxide + 2 H(+) = H2O2 + O2. Destroys superoxide anion radicals which are normally produced within the cells and which are toxic to biological systems. The chain is Superoxide dismutase [Mn] (sodA) from Pseudomonas putida (Arthrobacter siderocapsulatus).